The primary structure comprises 246 residues: Probable transcriptional regulatory protein TM1040_1893 (246 aa).

A disordered region spans residues 1–21 (MAGHSKWANIQHRKGRQDAAR).

It belongs to the TACO1 family.

The protein resides in the cytoplasm. This is Probable transcriptional regulatory protein TM1040_1893 from Ruegeria sp. (strain TM1040) (Silicibacter sp.).